Reading from the N-terminus, the 232-residue chain is Large ribosomal subunit protein uL1 (232 aa).

The protein belongs to the universal ribosomal protein uL1 family. In terms of assembly, part of the 50S ribosomal subunit.

Functionally, binds directly to 23S rRNA. The L1 stalk is quite mobile in the ribosome, and is involved in E site tRNA release. Its function is as follows. Protein L1 is also a translational repressor protein, it controls the translation of the L11 operon by binding to its mRNA. The protein is Large ribosomal subunit protein uL1 of Burkholderia mallei (strain NCTC 10247).